A 392-amino-acid polypeptide reads, in one-letter code: Protein O-glucosyltransferase 1 (392 aa).

The signal sequence occupies residues 1-23 (MELGVSSQLWLWLLLLLLPPVPG). 4 cysteine pairs are disulfide-bonded: Cys-49–Cys-56, Cys-54–Cys-357, Cys-102–Cys-108, and Cys-263–Cys-286. Asn-53 is a glycosylation site (N-linked (GlcNAc...) asparagine). The interaction with the consensus sequence C-X-S-X-[PA]-C in peptide substrates stretch occupies residues 103–107 (MFPSR). Asp-133 serves as the catalytic Proton donor/acceptor. An interaction with the consensus sequence C-X-S-X-[PA]-C in peptide substrates region spans residues 172 to 178 (AVWPIYP). Tyr-177 is a UDP-alpha-D-glucose binding site. A glycan (N-linked (GlcNAc...) asparagine) is linked at Asn-204. Residues Ser-212, Arg-218, and 274–279 (VAASFR) each bind UDP-alpha-D-glucose. Asn-373 is a glycosylation site (N-linked (GlcNAc...) asparagine). Residues 389-392 (KIEL) carry the Prevents secretion from ER motif.

This sequence belongs to the glycosyltransferase 90 family.

It is found in the endoplasmic reticulum lumen. The enzyme catalyses L-seryl-[EGF-like domain protein] + UDP-alpha-D-xylose = 3-O-(beta-D-xylosyl)-L-seryl-[EGF-like domain protein] + UDP + H(+). The catalysed reaction is L-seryl-[EGF-like domain protein] + UDP-alpha-D-glucose = 3-O-(beta-D-glucosyl)-L-seryl-[EGF-like domain protein] + UDP + H(+). Its pathway is protein modification; protein glycosylation. Its function is as follows. Dual specificity glycosyltransferase that catalyzes the transfer of glucose and xylose from UDP-glucose and UDP-xylose, respectively, to a serine residue found in the consensus sequence of C-X-S-X-P-C. Specifically targets extracellular EGF repeats of protein such as CRB2, F7, F9 and NOTCH2. Acts as a positive regulator of Notch signaling by mediating O-glucosylation of Notch, leading to regulate muscle development. Notch glucosylation does not affect Notch ligand binding. Required during early development to promote gastrulation: acts by mediating O-glucosylation of CRB2, which is required for CRB2 localization to the cell membrane. The sequence is that of Protein O-glucosyltransferase 1 (POGLUT1) from Bos taurus (Bovine).